The sequence spans 147 residues: Fibromodulin (147 aa).

LRR repeat units lie at residues 1 to 15 (LDHN…PLPR), 16 to 37 (SLRE…ALEG), 40 to 61 (NLTA…MRGL), 63 to 84 (SLIL…LPSA), 85 to 105 (LEQL…YFRG), and 108 to 128 (KLLY…ASNT). Asn5 carries N-linked (GlcNAc...) (keratan sulfate) asparagine glycosylation. Asn40 carries an N-linked (GlcNAc...) (keratan sulfate) asparagine glycan. Asn130 is a glycosylation site (N-linked (GlcNAc...) (keratan sulfate) asparagine). The LRR 7 repeat unit spans residues 133-147 (SLLELDLSYNQLQKI).

It belongs to the small leucine-rich proteoglycan (SLRP) family. SLRP class II subfamily. As to quaternary structure, binds to type I and type II collagen. Binds keratan sulfate chains.

Its subcellular location is the secreted. It localises to the extracellular space. The protein localises to the extracellular matrix. In terms of biological role, affects the rate of fibrils formation. May have a primary role in collagen fibrillogenesis. The polypeptide is Fibromodulin (FMOD) (Sus scrofa (Pig)).